Reading from the N-terminus, the 151-residue chain is UPF0178 protein PFL_5989 (151 aa).

It belongs to the UPF0178 family.

The protein is UPF0178 protein PFL_5989 of Pseudomonas fluorescens (strain ATCC BAA-477 / NRRL B-23932 / Pf-5).